We begin with the raw amino-acid sequence, 428 residues long: Sulfite exporter TauE/SafE family protein 6 (428 aa).

Helical transmembrane passes span 1-21 (MKTL…NANQ), 61-81 (ALVV…ASGI), 82-102 (GDGF…LKAA), 105-125 (FSAF…HFGC), 128-148 (LIDY…VSVG), 149-169 (VICN…VFLM), 245-265 (YWIL…LALS), 294-314 (VMSF…GMII), 332-352 (TSFM…LLGM), 356-376 (EAAY…LVFA), and 388-408 (IIVF…ASFG).

Belongs to the 4-toluene sulfonate uptake permease (TSUP) (TC 2.A.102) family.

Its subcellular location is the membrane. This Arabidopsis thaliana (Mouse-ear cress) protein is Sulfite exporter TauE/SafE family protein 6.